The following is a 505-amino-acid chain: Cytochrome P450 monooxygenase iliC (505 aa).

Residues 6-26 (LIAQHSLTLTIASSVLLVFLL) traverse the membrane as a helical segment. Position 453 (Cys-453) interacts with heme.

The protein belongs to the cytochrome P450 family. It depends on heme as a cofactor.

It is found in the membrane. The catalysed reaction is (3E,5S)-3-[(2E,4E,8S,10E,12Z)-1-hydroxy-4,8-dimethyltetradeca-2,4,10,12-tetraen-1-ylidene]-5-[(4-hydroxyphenyl)methyl]pyrrolidine-2,4-dione + reduced [NADPH--hemoprotein reductase] + O2 = 3-[(2E,4E,8S,10E,12Z)-4,8-dimethyltetradeca-2,4,10,12-tetraenoyl]-4-hydroxy-5-(4-hydroxyphenyl)-1,2-dihydropyridin-2-one + oxidized [NADPH--hemoprotein reductase] + 2 H2O. It participates in mycotoxin biosynthesis. In terms of biological role, cytochrome P450 monooxygenase; part of the gene cluster that mediates the biosynthesis of ilicicolin H, a 4-hydroxy-2-pyridonealkaloid that has potent and broad antifungal activities by inhibiting the mitochondrial respiration chain. IliC catalyzes the ring expansion of the tetramate intermediate to the acyclic 2-pyridone intermediate that contains the trans bis-diene chain. The biosynthesis of ilicicolin H starts with formation of the tetramic acid by the hybrid PKS-NRPS synthetase iliA with the partnering trans-enoyl reductase iliB since iliA lacks a designated enoylreductase (ER) domain. The cytochrome P450 monooxygenase iliC then catalyzes the ring expansion of the tetramate to the acyclic 2-pyridone. The pericyclase iliD further converts the acyclic 2-pyridone into 8-epi-ilicicolin H. 8-epi-ilicicolin H might then spontaneously convert to ilicicolin H since ilicicolin H is produced in the absence of the epimerase iliE, in contrast to what was observed for the Talaromyces variabilis ilicolin H biosynthetic pathway. This Neonectria sp. (strain DH2) protein is Cytochrome P450 monooxygenase iliC.